The primary structure comprises 453 residues: Nuclear and cytoplasmic polyadenylated RNA-binding protein PUB1 (453 aa).

Residues 1–67 form a disordered region; the sequence is MSENNEEQHQ…PSVVPANAIT (67 aa). S2 bears the N-acetylserine mark. RRM domains are found at residues 75 to 152 and 162 to 240; these read RVLY…WAFQ and FNLF…WAAK. Positions 241-262 are disordered; the sequence is RDNNNNNNYQQRRNYGNNNRGG. Low complexity predominate over residues 244–262; sequence NNNNNYQQRRNYGNNNRGG. R260 is subject to Omega-N-methylarginine. An RNA-binding RGG-box region spans residues 260–264; it reads RGGFR. Residues 341–413 form the RRM 3 domain; sequence TTAYIGNIPH…RNLRTGWGKE (73 aa). A disordered region spans residues 419–453; it reads PQQQQQGGQPLIMNDQQQPVMSEQQQQQQQQQQQQ. The segment covering 434–453 has biased composition (low complexity); sequence QQQPVMSEQQQQQQQQQQQQ.

Interacts with NAB2.

The protein resides in the cytoplasm. It is found in the nucleus. The protein localises to the P-body. Its subcellular location is the stress granule. Functionally, may be associated with hnRNA within the nucleus and remains associated during nucleocytoplasmic mRNA transport, once the proteins are in the cytoplasm, disassembly of PUB1-RNA complexes may occur prior to PAB1 binding and formation of a translationally competent RNP complex. Binds to polyadenylated RNA; prefers to bind poly(rU); binds to T-rich single-stranded DNA. In Saccharomyces cerevisiae (strain ATCC 204508 / S288c) (Baker's yeast), this protein is Nuclear and cytoplasmic polyadenylated RNA-binding protein PUB1.